Reading from the N-terminus, the 252-residue chain is Probable endonuclease 4 (252 aa).

Zn(2+)-binding residues include His56, His96, Glu129, Asp162, His165, His191, Asp204, His206, and Glu233.

The protein belongs to the AP endonuclease 2 family. Requires Zn(2+) as cofactor.

The catalysed reaction is Endonucleolytic cleavage to 5'-phosphooligonucleotide end-products.. Functionally, endonuclease IV plays a role in DNA repair. It cleaves phosphodiester bonds at apurinic or apyrimidinic (AP) sites, generating a 3'-hydroxyl group and a 5'-terminal sugar phosphate. This Mycobacterium tuberculosis (strain ATCC 25177 / H37Ra) protein is Probable endonuclease 4.